Consider the following 230-residue polypeptide: Sugar fermentation stimulation protein homolog (230 aa).

Belongs to the SfsA family.

In Clostridium botulinum (strain 657 / Type Ba4), this protein is Sugar fermentation stimulation protein homolog.